A 530-amino-acid chain; its full sequence is Probable glycerol-3-phosphate acyltransferase 2 (530 aa).

3 helical membrane passes run 70–90 (YFMV…LLVL), 93–113 (FISL…SFFG), and 275–295 (LVLF…LVFG). Residues 339–344 (HRTLLD) carry the HXXXXD motif motif.

This sequence belongs to the GPAT/DAPAT family. Weakly or not expressed in roots, leaves, seedlings, developing siliques and flower buds.

The protein resides in the membrane. It carries out the reaction sn-glycerol 3-phosphate + an acyl-CoA = a 1-acyl-sn-glycero-3-phosphate + CoA. It participates in phospholipid metabolism; CDP-diacylglycerol biosynthesis; CDP-diacylglycerol from sn-glycerol 3-phosphate: step 1/3. In terms of biological role, esterifies acyl-group from acyl-ACP to the sn-1 position of glycerol-3-phosphate, an essential step in glycerolipid biosynthesis. In Arabidopsis thaliana (Mouse-ear cress), this protein is Probable glycerol-3-phosphate acyltransferase 2 (GPAT2).